We begin with the raw amino-acid sequence, 590 residues long: Aspartate--tRNA ligase (590 aa).

Residue Glu-180 participates in L-aspartate binding. Residues 204 to 207 (QLFK) are aspartate. An L-aspartate-binding site is contributed by Arg-226. Residues 226–228 (RDE) and Gln-235 contribute to the ATP site. His-454 provides a ligand contact to L-aspartate. Glu-488 contacts ATP. Residue Arg-495 participates in L-aspartate binding. 540-543 (GFDR) is an ATP binding site.

Belongs to the class-II aminoacyl-tRNA synthetase family. Type 1 subfamily. Homodimer.

The protein localises to the cytoplasm. It catalyses the reaction tRNA(Asp) + L-aspartate + ATP = L-aspartyl-tRNA(Asp) + AMP + diphosphate. In terms of biological role, catalyzes the attachment of L-aspartate to tRNA(Asp) in a two-step reaction: L-aspartate is first activated by ATP to form Asp-AMP and then transferred to the acceptor end of tRNA(Asp). In Clostridium kluyveri (strain NBRC 12016), this protein is Aspartate--tRNA ligase.